A 133-amino-acid chain; its full sequence is Large ribosomal subunit protein uL15 (133 aa).

The tract at residues 1–64 is disordered; the sequence is MGLENLKPAK…QPLQRRLPKI (64 aa).

It belongs to the universal ribosomal protein uL15 family. In terms of assembly, part of the 50S ribosomal subunit.

In terms of biological role, binds to the 23S rRNA. This is Large ribosomal subunit protein uL15 from Helicobacter pylori (strain G27).